A 101-amino-acid chain; its full sequence is Large ribosomal subunit protein bL28 (101 aa).

It belongs to the bacterial ribosomal protein bL28 family.

In Rhodopseudomonas palustris (strain BisB18), this protein is Large ribosomal subunit protein bL28.